The sequence spans 176 residues: Ribosome rescue factor SmrB (176 aa).

The 76-residue stretch at 97 to 172 (LDMHGMTQQE…GDGALLVLLS (76 aa)) folds into the Smr domain.

This sequence belongs to the SmrB family. Associates with collided ribosomes, but not with correctly translating polysomes.

Its function is as follows. Acts as a ribosome collision sensor. Detects stalled/collided disomes (pairs of ribosomes where the leading ribosome is stalled and a second ribosome has collided with it) and endonucleolytically cleaves mRNA at the 5' boundary of the stalled ribosome. Stalled/collided disomes form a new interface (primarily via the 30S subunits) that binds SmrB. Cleaved mRNA becomes available for tmRNA ligation, leading to ribosomal subunit dissociation and rescue of stalled ribosomes. In Vibrio vulnificus (strain YJ016), this protein is Ribosome rescue factor SmrB.